The following is a 434-amino-acid chain: ATP-dependent protease ATPase subunit HslU (434 aa).

Residues Val18, 60–65 (GVGKTE), Asp247, Glu312, and Arg384 each bind ATP.

The protein belongs to the ClpX chaperone family. HslU subfamily. As to quaternary structure, a double ring-shaped homohexamer of HslV is capped on each side by a ring-shaped HslU homohexamer. The assembly of the HslU/HslV complex is dependent on binding of ATP.

It localises to the cytoplasm. Its function is as follows. ATPase subunit of a proteasome-like degradation complex; this subunit has chaperone activity. The binding of ATP and its subsequent hydrolysis by HslU are essential for unfolding of protein substrates subsequently hydrolyzed by HslV. HslU recognizes the N-terminal part of its protein substrates and unfolds these before they are guided to HslV for hydrolysis. The sequence is that of ATP-dependent protease ATPase subunit HslU from Bradyrhizobium sp. (strain BTAi1 / ATCC BAA-1182).